The sequence spans 416 residues: MLKRDMNIADYDPELYAAIQEETLRQEEHIELIASENYTSPRVMQAQGSQLTNKYAEGYPGKRYYGGCEYVDKAEALAIDRACQLFGCEYANVQPHSGSQANSAVYMALLNPGDTVLGMSLAHGGHLTHGSPVNFSGKHYNVIPYGIDEAGQINYDEMEALALEHKPKMIIGGFSAYSQIVDWKRMREIADKVGAYLFVDMAHVAGLIAAGVYPSPVPFAHVVTTTTHKTLAGPRGGLILSNAGEEMYKKLNSAVFPGGQGGPLMHVIAAKAVAFKEAMEPEFKEYQARVVKNAKAMVAQFQERGYKIVSNSTENHLFLVDLIDKNITGKEADAALGAANITVNKNSVPNDPRSPFVTSGIRVGTPAITRRGFTEQDAKDLANWMCDVLDNINDQGVIEATKQKVLAICQRLPVYA.

(6S)-5,6,7,8-tetrahydrofolate is bound by residues Leu-121 and 125–127 (GHL). Lys-229 is subject to N6-(pyridoxal phosphate)lysine. Residues Glu-245 and 354–356 (SPF) each bind (6S)-5,6,7,8-tetrahydrofolate.

This sequence belongs to the SHMT family. In terms of assembly, homodimer. Pyridoxal 5'-phosphate serves as cofactor.

The protein localises to the cytoplasm. The catalysed reaction is (6R)-5,10-methylene-5,6,7,8-tetrahydrofolate + glycine + H2O = (6S)-5,6,7,8-tetrahydrofolate + L-serine. It participates in one-carbon metabolism; tetrahydrofolate interconversion. The protein operates within amino-acid biosynthesis; glycine biosynthesis; glycine from L-serine: step 1/1. Functionally, catalyzes the reversible interconversion of serine and glycine with tetrahydrofolate (THF) serving as the one-carbon carrier. This reaction serves as the major source of one-carbon groups required for the biosynthesis of purines, thymidylate, methionine, and other important biomolecules. Also exhibits THF-independent aldolase activity toward beta-hydroxyamino acids, producing glycine and aldehydes, via a retro-aldol mechanism. The chain is Serine hydroxymethyltransferase 1 from Vibrio cholerae serotype O1 (strain ATCC 39315 / El Tor Inaba N16961).